The sequence spans 149 residues: Transcriptional regulator MraZ (149 aa).

2 SpoVT-AbrB domains span residues 6–52 (HAHR…TPPD) and 81–124 (SEEV…DKRE).

The protein belongs to the MraZ family. Forms oligomers.

It localises to the cytoplasm. Its subcellular location is the nucleoid. The protein is Transcriptional regulator MraZ of Maridesulfovibrio salexigens (strain ATCC 14822 / DSM 2638 / NCIMB 8403 / VKM B-1763) (Desulfovibrio salexigens).